A 1470-amino-acid polypeptide reads, in one-letter code: Transient receptor potential cation channel subfamily M member 2 (1470 aa).

The Cytoplasmic segment spans residues 1-725; it reads MDEAALEPTL…GELSVDNPHW (725 aa). ADP-D-ribose-binding positions include Tyr267, Arg274, 305–308, and Arg330; that span reads GPGT. The stretch at 726-738 is an intramembrane region; sequence KVLLCMIFFPLIY. At 739–808 the chain is on the cytoplasmic side; it reads TGFLTFRRDE…MSFLKSPQVK (70 aa). A helical transmembrane segment spans residues 809–829; the sequence is FYWNIASYFGFLWLFAVVLMI. The Extracellular segment spans residues 830–836; it reads DFQTSPS. Residues 837-857 traverse the membrane as a helical segment; it reads WRELLLYVWLTSLVCEEIRQL. Glu853 and Gln856 together coordinate Ca(2+). The Cytoplasmic portion of the chain corresponds to 858–876; the sequence is YHDFDGSGFRRKAKMYIKD. Residues 877–897 traverse the membrane as a helical segment; sequence LWNILDVLSIVLFIAGLICRL. Asn879 serves as a coordination point for Ca(2+). Residues 898–905 lie on the Extracellular side of the membrane; that stretch reads QASDTVFY. Residues 906-926 traverse the membrane as a helical segment; the sequence is IGKVILCIDFIIFCLRLMAIF. Over 927 to 941 the chain is Cytoplasmic; the sequence is SISRTLGPKIIIVRR. Residues 942 to 968 traverse the membrane as a helical segment; that stretch reads MMLDLFFFMFLLSIWVVAYGVAKQGIL. The Extracellular portion of the chain corresponds to 969-977; that stretch reads IENEERLNW. The segment at residues 978-1002 is an intramembrane region (pore-forming); sequence IIRGAVYEPYITIFGNFPTNIDNTL. The Selectivity filter signature appears at 991–993; sequence FGN. At 1003 to 1034 the chain is on the extracellular side; it reads FDISSCSVNASDPLKPKCPMLNADNTPVFPEW. Residues Cys1008 and Cys1020 are joined by a disulfide bond. A glycan (N-linked (GlcNAc...) asparagine) is linked at Asn1011. A helical transmembrane segment spans residues 1035–1059; that stretch reads LTIMMLCVYLLFANILLLNLLIAIF. The Cytoplasmic portion of the chain corresponds to 1060-1087; the sequence is NYTFQEVQDNTDTIWKFQRYELIKEYHS. Glu1084 is a binding site for Ca(2+). The stretch at 1088 to 1105 is an intramembrane region; the sequence is RPALPPPFILLSHLILFI. Topologically, residues 1106 to 1470 are cytoplasmic; it reads RGVFLRDLPQ…QIAHHHNTYF (365 aa). The divergent Nudix hydrolase-like domain stretch occupies residues 1157 to 1470; it reads HRIHDTAEKV…QIAHHHNTYF (314 aa). Disordered stretches follow at residues 1215-1256 and 1281-1314; these read KSKV…LQYP and PPVYNQQDSSESDTSALDKHRNPGGRTGIRGKGA. Over residues 1231–1244 the composition is skewed to acidic residues; sequence DDGDSSGQETDDEE. Residues 1283-1295 are compositionally biased toward polar residues; it reads VYNQQDSSESDTS. Asp1398 and Arg1400 together coordinate ADP-D-ribose.

This sequence belongs to the transient receptor (TC 1.A.4) family. LTrpC subfamily. TRPM2 sub-subfamily. Homotetramer.

The protein resides in the cell membrane. The enzyme catalyses Ca(2+)(in) = Ca(2+)(out). It carries out the reaction Na(+)(in) = Na(+)(out). With respect to regulation, activated by intracellular ADP-ribose. Ca(2+) and PI(4,5)P2 are required for channel opening by ADP-ribose. In terms of biological role, nonselective, voltage-independent cation channel that mediates Ca(2+) influx, leading to increased cytoplasmic Ca(2+) levels. Functions as a ligand-gated ion channel, gated by intracellular adenosine diphosphate ribose (ADP-ribose), Ca(2+), warm temperature, and oxidative stress. Binding of ADP-ribose to the cytoplasmic N-terminal region causes a conformation change; the channel is primed but still requires Ca(2+) binding to trigger channel opening. This Danio rerio (Zebrafish) protein is Transient receptor potential cation channel subfamily M member 2.